Here is a 257-residue protein sequence, read N- to C-terminus: Type 2 phosphatidylinositol 4,5-bisphosphate 4-phosphatase (257 aa).

Positions 1 to 10 (MAADGVDERS) are enriched in basic and acidic residues. The interval 1 to 34 (MAADGVDERSPLLSASHSGSVTPTAPPYLQDSSP) is disordered. Over residues 13-23 (LSASHSGSVTP) the composition is skewed to polar residues. At threonine 22 the chain carries Phosphothreonine. The residue at position 33 (serine 33) is a Phosphoserine. Cysteine 107 is an active-site residue. The short motif at 107–113 (CKDTSRR) is the CX5R motif element. A run of 2 helical transmembrane segments spans residues 192 to 212 (CCAY…LTVG) and 227 to 247 (WAIA…WGAI).

It localises to the late endosome membrane. Its subcellular location is the lysosome membrane. The protein localises to the cytoplasmic vesicle. It is found in the phagosome membrane. The protein resides in the cell membrane. It carries out the reaction a 1,2-diacyl-sn-glycero-3-phospho-(1D-myo-inositol-4,5-bisphosphate) + H2O = a 1,2-diacyl-sn-glycero-3-phospho-(1D-myo-inositol-5-phosphate) + phosphate. Functionally, catalyzes the hydrolysis of phosphatidylinositol-4,5-bisphosphate (PtdIns-4,5-P2) to phosphatidylinositol-4-phosphate (PtdIns-4-P). Does not hydrolyze phosphatidylinositol 3,4,5-trisphosphate, phosphatidylinositol 3,4-bisphosphate, inositol 3,5-bisphosphate, inositol 3,4-bisphosphate, phosphatidylinositol 5-monophosphate, phosphatidylinositol 4-monophosphate and phosphatidylinositol 3-monophosphate. Negatively regulates the phagocytosis of large particles by reducing phagosomal phosphatidylinositol 4,5-bisphosphate accumulation during cup formation. The chain is Type 2 phosphatidylinositol 4,5-bisphosphate 4-phosphatase from Bos taurus (Bovine).